Here is a 769-residue protein sequence, read N- to C-terminus: Serine protease HtrA-like (769 aa).

The segment covering 1-20 (MDIGKKHVIPKSQYRRKRRE) has biased composition (basic residues). The tract at residues 1–390 (MDIGKKHVIP…ATSKLNKGRA (390 aa)) is disordered. Basic and acidic residues-rich tracts occupy residues 21–64 (FFHN…ERFK) and 71–108 (LEQR…DVSK). Polar residues predominate over residues 126-137 (YEQNSEATLSTK). Residues 138–186 (STDKVESSDMRKLSPDKNKVGHEEQHVLSKPSEHDKETRIDFESSRTDS) are compositionally biased toward basic and acidic residues. Composition is skewed to polar residues over residues 202-221 (GNES…NTVP) and 247-262 (QQSQ…YGDS). Residues 264-295 (QNDKSNHENDLSHHTPSKSDDKDNVMREDHIV) are compositionally biased toward basic and acidic residues. The span at 298 to 308 (NPDNDINTPSL) shows a compositional bias: polar residues. Over residues 310–330 (KIDDDRKLDEKIHVEDKHKQN) the composition is skewed to basic and acidic residues. Residues 331-347 (ADSSETVGYQSQSSVSH) are compositionally biased toward polar residues. Residues 348-362 (RSTEKRNMAINDHHK) are compositionally biased toward basic and acidic residues. Residues 366–390 (QKLNTKTSANNNQKKATSKLNKGRA) are compositionally biased toward polar residues. Residues 410–430 (LVILMGIIILIVILNAIFNNV) form a helical membrane-spanning segment. Active-site charge relay system residues include His-504, Asp-534, and Ser-619. Residues 680–733 (IASLNSFERQAVKLPGKVKNGVVVDQVDNNGLADQSSLKKGDVITELDGKLLED) enclose the PDZ domain.

It belongs to the peptidase S1C family.

It localises to the cell membrane. This is Serine protease HtrA-like from Staphylococcus aureus (strain bovine RF122 / ET3-1).